Here is a 480-residue protein sequence, read N- to C-terminus: tRNA modification GTPase MnmE (480 aa).

3 residues coordinate (6S)-5-formyl-5,6,7,8-tetrahydrofolate: R20, E114, and K154. Residues 250–406 (GLKLAIIGPP…ILKNIENIAE (157 aa)) enclose the TrmE-type G domain. N260 serves as a coordination point for K(+). GTP-binding positions include 260–265 (NVGKSS), 279–285 (SNIAGTT), and 304–307 (DTAG). S264 lines the Mg(2+) pocket. Positions 279, 281, and 284 each coordinate K(+). T285 lines the Mg(2+) pocket. K480 contributes to the (6S)-5-formyl-5,6,7,8-tetrahydrofolate binding site.

It belongs to the TRAFAC class TrmE-Era-EngA-EngB-Septin-like GTPase superfamily. TrmE GTPase family. Homodimer. Heterotetramer of two MnmE and two MnmG subunits. K(+) is required as a cofactor.

It is found in the cytoplasm. Functionally, exhibits a very high intrinsic GTPase hydrolysis rate. Involved in the addition of a carboxymethylaminomethyl (cmnm) group at the wobble position (U34) of certain tRNAs, forming tRNA-cmnm(5)s(2)U34. The sequence is that of tRNA modification GTPase MnmE from Rickettsia felis (strain ATCC VR-1525 / URRWXCal2) (Rickettsia azadi).